Consider the following 311-residue polypeptide: Ketoisovalerate oxidoreductase subunit VorB (311 aa).

As to quaternary structure, heterotetramer of one alpha, one beta, one delta and one gamma chain.

It carries out the reaction 3-methyl-2-oxobutanoate + 2 oxidized [2Fe-2S]-[ferredoxin] + CoA = 2-methylpropanoyl-CoA + 2 reduced [2Fe-2S]-[ferredoxin] + CO2 + H(+). This Pyrococcus horikoshii (strain ATCC 700860 / DSM 12428 / JCM 9974 / NBRC 100139 / OT-3) protein is Ketoisovalerate oxidoreductase subunit VorB (vorB).